A 240-amino-acid chain; its full sequence is Mitochondrial inner membrane protease ATP23 (240 aa).

His-140 contacts a divalent metal cation. The active site involves Glu-141. His-144 serves as a coordination point for a divalent metal cation.

Belongs to the peptidase M76 family.

Its subcellular location is the mitochondrion inner membrane. In terms of biological role, has a dual role in the assembly of mitochondrial ATPase. Acts as a protease that removes N-terminal residues of mitochondrial ATPase CF(0) subunit 6 at the intermembrane space side. Also involved in the correct assembly of the membrane-embedded ATPase CF(0) particle, probably mediating association of subunit 6 with the subunit 9 ring. The polypeptide is Mitochondrial inner membrane protease ATP23 (ATP23) (Scheffersomyces stipitis (strain ATCC 58785 / CBS 6054 / NBRC 10063 / NRRL Y-11545) (Yeast)).